Consider the following 317-residue polypeptide: Melanocyte-stimulating hormone receptor (317 aa).

Residues 1–37 (MPVQGSQRRLLGSLNSTPTATPHLGLAANQTGARCLE) lie on the Extracellular side of the membrane. Residue Asn29 is glycosylated (N-linked (GlcNAc...) asparagine). A helical transmembrane segment spans residues 38–63 (VSVPDGLFLSLGLVSLVENVLVVTAI). Residues 64-72 (AKNRNLHSP) are Cytoplasmic-facing. Residues 73 to 93 (MYCFICCLALSDLLVSGSNML) form a helical membrane-spanning segment. The Extracellular portion of the chain corresponds to 94–118 (ETAVTLLLEAGALAARAAVVQQLDN). Residues 119-140 (VIDVITCSSMLSSLCFLGAIAV) traverse the membrane as a helical segment. Residues 141–163 (DRYISIFYALRYHSIVTLPRARR) are Cytoplasmic-facing. A helical transmembrane segment spans residues 164–183 (AVAAIWVASVLCSTLFIAYY). Topologically, residues 184–191 (DHAAVLLC) are extracellular. The chain crosses the membrane as a helical span at residues 192-211 (LVVFFLAMLVLMAVLYVHML). Topologically, residues 212–240 (ARACQHAQGIARLHKRQRLAHQGFGLKGA) are cytoplasmic. A helical transmembrane segment spans residues 241–266 (ATLTILLGIFFLCWGPFFLHLTLIVL). At 267–279 (CPQHPTCSCIFKN) the chain is on the extracellular side. Residues 280 to 300 (FNLFLALIICNAIIDPLIYAF) form a helical membrane-spanning segment. Residues 301–317 (RSQELRRTLKEVLLCSW) are Cytoplasmic-facing. Cys315 is lipidated: S-palmitoyl cysteine.

Belongs to the G-protein coupled receptor 1 family. In terms of assembly, interacts with MGRN1, but does not undergo MGRN1-mediated ubiquitination; this interaction competes with GNAS-binding and thus inhibits agonist-induced cAMP production. Interacts with OPN3; the interaction results in a decrease in MC1R-mediated cAMP signaling and ultimately a decrease in melanin production in melanocytes.

The protein resides in the cell membrane. Functionally, receptor for MSH (alpha, beta and gamma) and ACTH. The activity of this receptor is mediated by G proteins which activate adenylate cyclase. Mediates melanogenesis, the production of eumelanin (black/brown) and phaeomelanin (red/yellow), via regulation of cAMP signaling in melanocytes. In Macaca sylvanus (Barbary macaque), this protein is Melanocyte-stimulating hormone receptor (MC1R).